Reading from the N-terminus, the 445-residue chain is POU domain, class 3, transcription factor 2 (445 aa).

Disordered stretches follow at residues 63-173 (TALS…WRSA), 203-269 (LGAG…TPTS), 336-361 (EADS…KKRT), and 411-445 (EKRM…TPVQ). Residues 68–90 (GGSGGGGGGGGGGGGGGGGGGDG) show a composition bias toward gly residues. Residues 125 to 151 (QQQHQQQQQQQQQQQQQQQQQQQQQQQ) are compositionally biased toward low complexity. Residues 217–226 (LRDAHDEPHH) show a composition bias toward basic and acidic residues. The span at 227–237 (ADHHPHPHSHP) shows a compositional bias: basic residues. Residues 239–253 (QQPPPPPPPQGPPGH) are compositionally biased toward pro residues. One can recognise a POU-specific domain in the interval 264–338 (EDTPTSDDLE…LLNKWLEEAD (75 aa)). S343 is modified (phosphoserine). Residues 356–415 (KRKKRTSIEVSVKGALESHFLKCPKPSAQEITSLADSLQLEKEVVRVWFCNRRQKEKRMT) constitute a DNA-binding region (homeobox).

The protein belongs to the POU transcription factor family. Class-3 subfamily. In terms of assembly, interacts with PQBP1. Interaction with ISL1. Expressed specifically at high levels in the brain.

The protein localises to the nucleus. Its function is as follows. Transcription factor that plays a key role in neuronal differentiation. Binds preferentially to the recognition sequence which consists of two distinct half-sites, ('GCAT') and ('TAAT'), separated by a non-conserved spacer region of 0, 2, or 3 nucleotides. Acts as a transcriptional activator when binding cooperatively with SOX4, SOX11, or SOX12 to gene promoters. The combination of three transcription factors, ASCL1, POU3F2/BRN2 and MYT1L, is sufficient to reprogram fibroblasts and other somatic cells into induced neuronal (iN) cells in vitro. Acts downstream of ASCL1, accessing chromatin that has been opened by ASCL1, and promotes transcription of neuronal genes. In Rattus norvegicus (Rat), this protein is POU domain, class 3, transcription factor 2 (Pou3f2).